Consider the following 1166-residue polypeptide: Serine-aspartate repeat-containing protein E (1166 aa).

The signal sequence occupies residues Met1–Ala52. Positions Phe23–Ser34 match the YSIRK-G/S signaling motif motif. Residues Ala53–Lys606 are ligand binding A region. The segment at Glu54–Pro253 is disordered. The span at Ala61–Val75 shows a compositional bias: basic and acidic residues. Residues Glu77–Asn90 are compositionally biased toward low complexity. Positions Ile92–Ser108 are enriched in basic and acidic residues. Positions Asn118–Gln129 are enriched in polar residues. Residues Asn130–Thr145 show a composition bias toward basic and acidic residues. A compositionally biased stretch (low complexity) spans Thr166–Glu178. Polar residues predominate over residues Ile179–Thr212. Positions Ser221 to Thr246 are enriched in basic and acidic residues. 3 consecutive CNA-B domains span residues Leu607 to Pro719, Lys720 to Pro829, and Lys830 to Thr940. The segment at Val904–Asn1141 is disordered. Acidic residues-rich tracts occupy residues Thr908–Glu918 and Tyr935–Ser1105. The LPXTG sorting signal motif lies at Leu1129 to Gly1133. Residue Thr1132 is modified to Pentaglycyl murein peptidoglycan amidated threonine. Positions Gly1133–Lys1166 are cleaved as a propeptide — removed by sortase.

This sequence belongs to the serine-aspartate repeat-containing protein (SDr) family. Interacts with host complement factor H/CFAH (via C-terminus). Interacts with host complement regulator C4BPA.

Its subcellular location is the secreted. The protein resides in the cell wall. Functionally, cell surface-associated calcium-binding protein which plays an important role in adhesion and pathogenesis. Contributes to the resistance to killing by innate immune components in blood and thus attenuates bacterial clearance by interacting with host complement factor H/CFAH and modulating its activity. Also inhibits bacterial opsonization and killing by interacting with host complement regulator C4BPA and thus inhibiting classical complement pathway activation. The protein is Serine-aspartate repeat-containing protein E (sdrE) of Staphylococcus aureus (strain COL).